The following is a 237-amino-acid chain: MAPEDTYPELQEEEIDVEAELEKLILEDSEAEAGTSSGETAAEPSPDPGEALKQLQHELEVVRQQLKEKEDAYLRLYADFENYRRRTQREKEEFSQKERQKFVLEILPVVDSFERAQQQLKLETDRERELHNSYQSVYRLLVECLKKMGVSRMKSVGQPFDPNLHEAIARQPSPDYPEDVVAVEYQPGYKLGDLVIRHAMVAVSAGSPSSEPSPPAQATIEAGPENTPASPQNPQPS.

Disordered regions lie at residues 24–56 and 204–237; these read LILE…KQLQ and SAGS…PQPS.

This sequence belongs to the GrpE family. In terms of assembly, homodimer.

It is found in the cytoplasm. Its function is as follows. Participates actively in the response to hyperosmotic and heat shock by preventing the aggregation of stress-denatured proteins, in association with DnaK and GrpE. It is the nucleotide exchange factor for DnaK and may function as a thermosensor. Unfolded proteins bind initially to DnaJ; upon interaction with the DnaJ-bound protein, DnaK hydrolyzes its bound ATP, resulting in the formation of a stable complex. GrpE releases ADP from DnaK; ATP binding to DnaK triggers the release of the substrate protein, thus completing the reaction cycle. Several rounds of ATP-dependent interactions between DnaJ, DnaK and GrpE are required for fully efficient folding. This is Protein GrpE from Synechococcus sp. (strain JA-2-3B'a(2-13)) (Cyanobacteria bacterium Yellowstone B-Prime).